The following is a 454-amino-acid chain: Cholesterol 7-desaturase nvd (454 aa).

The next 2 helical transmembrane spans lie at 13–33 (VLCP…LGAG) and 47–67 (TTLS…LWGW). Residues 117-221 (WYRALDSHLL…SCELNGMVFV (105 aa)) enclose the Rieske domain. Residues Cys158, His160, Cys178, and His181 each contribute to the [2Fe-2S] cluster site.

The protein belongs to the cholesterol 7-desaturase family. [2Fe-2S] cluster serves as cofactor.

Its subcellular location is the membrane. The enzyme catalyses cholesterol + NADPH + O2 + H(+) = 7-dehydrocholesterol + NADP(+) + 2 H2O. It carries out the reaction cholesterol + NADH + O2 + H(+) = 7-dehydrocholesterol + NAD(+) + 2 H2O. Its pathway is steroid hormone biosynthesis; dafachronic acid biosynthesis. Functionally, catalyzes the production of 7-dehydrocholesterol (7-DHC or cholesta-5,7-dien-3beta-ol) by inserting a double bond (desaturating) at the C7-C8 single bond of cholesterol. This reaction is the first step in the synthesis of the steroid hormone Delta(7)-dafachronic acid. This chain is Cholesterol 7-desaturase nvd (nvd), found in Xenopus laevis (African clawed frog).